Here is a 357-residue protein sequence, read N- to C-terminus: Dihydroorotate dehydrogenase (quinone) (357 aa).

Residues 66–70 and T90 contribute to the FMN site; that span reads AGFDK. K70 contacts substrate. 115-119 is a binding site for substrate; sequence NRMGF. N143 and N176 together coordinate FMN. N176 contacts substrate. S179 (nucleophile) is an active-site residue. Position 181 (N181) interacts with substrate. The FMN site is built by K212 and T240. 241–242 is a substrate binding site; that stretch reads NT. Residues G264, G293, and 314–315 contribute to the FMN site; that span reads YT.

The protein belongs to the dihydroorotate dehydrogenase family. Type 2 subfamily. As to quaternary structure, monomer. Requires FMN as cofactor.

Its subcellular location is the cell membrane. It carries out the reaction (S)-dihydroorotate + a quinone = orotate + a quinol. It participates in pyrimidine metabolism; UMP biosynthesis via de novo pathway; orotate from (S)-dihydroorotate (quinone route): step 1/1. Its function is as follows. Catalyzes the conversion of dihydroorotate to orotate with quinone as electron acceptor. The polypeptide is Dihydroorotate dehydrogenase (quinone) (Mycobacterium bovis (strain BCG / Pasteur 1173P2)).